The following is a 176-amino-acid chain: Gamma-crystallin M2 (176 aa).

Beta/gamma crystallin 'Greek key' domains follow at residues 2–40 (GKVIFYEDRNFQGRHYECSSDCADLSPYFSRCNSIRVEG) and 41–83 (GCWV…RIIP). A connecting peptide region spans residues 84–88 (QYRGS). Beta/gamma crystallin 'Greek key' domains lie at 89 to 129 (YRMR…HVMD) and 130 to 172 (GYWI…RRIM).

The protein belongs to the beta/gamma-crystallin family. As to quaternary structure, monomer.

Crystallins are the dominant structural components of the vertebrate eye lens. In Chiloscyllium indicum (Slender bamboo shark), this protein is Gamma-crystallin M2 (GM2).